The following is a 780-amino-acid chain: Aconitate hydratase, mitochondrial (780 aa).

The transit peptide at 1–27 directs the protein to the mitochondrion; it reads MAPYSLLVSRLQKALGARQYHVASVLC. Residue K31 is modified to N6-succinyllysine. K50 is modified (N6-acetyllysine; alternate). K50 carries the N6-succinyllysine; alternate modification. A substrate-binding site is contributed by Q99. N6-acetyllysine; alternate is present on residues K138 and K144. N6-succinyllysine; alternate is present on residues K138 and K144. 192 to 194 contacts substrate; the sequence is DSH. Position 233 is an N6-acetyllysine; alternate (K233). An N6-succinyllysine; alternate modification is found at K233. Residue C385 participates in [4Fe-4S] cluster binding. An N6-succinyllysine modification is found at K411. The [4Fe-4S] cluster site is built by C448 and C451. Positions 474 and 479 each coordinate substrate. K517 and K523 each carry N6-acetyllysine; alternate. 2 positions are modified to N6-succinyllysine; alternate: K517 and K523. Residues 524 to 537 show a composition bias toward basic and acidic residues; sequence LEAPDADELPRAEF. A disordered region spans residues 524-560; it reads LEAPDADELPRAEFDPGQDTYQHPPKDSSGQQVDVSP. An N6-succinyllysine modification is found at K549. Polar residues predominate over residues 551-560; that stretch reads SSGQQVDVSP. The residue at position 559 (S559) is a Phosphoserine. K573 carries the post-translational modification N6-acetyllysine; alternate. The residue at position 573 (K573) is an N6-succinyllysine; alternate. N6-succinyllysine is present on K591. An N6-acetyllysine; alternate modification is found at K605. The residue at position 605 (K605) is an N6-succinyllysine; alternate. Residue R607 participates in substrate binding. K628 carries the post-translational modification N6-succinyllysine. The residue at position 670 (S670) is a Phosphoserine. 670 to 671 contacts substrate; that stretch reads SR. K689 is modified (N6-succinyllysine). K723 and K730 each carry N6-acetyllysine; alternate. An N6-succinyllysine; alternate mark is found at K723 and K730. N6-acetyllysine is present on residues K736 and K743.

It belongs to the aconitase/IPM isomerase family. In terms of assembly, monomer. It depends on [4Fe-4S] cluster as a cofactor. Forms covalent cross-links mediated by transglutaminase TGM2, between a glutamine and the epsilon-amino group of a lysine residue, forming homopolymers and heteropolymers.

The protein localises to the mitochondrion. The catalysed reaction is citrate = D-threo-isocitrate. The protein operates within carbohydrate metabolism; tricarboxylic acid cycle; isocitrate from oxaloacetate: step 2/2. Catalyzes the isomerization of citrate to isocitrate via cis-aconitate. This is Aconitate hydratase, mitochondrial (ACO2) from Bos taurus (Bovine).